A 122-amino-acid chain; its full sequence is Large ribosomal subunit protein uL14 (122 aa).

The protein belongs to the universal ribosomal protein uL14 family. As to quaternary structure, part of the 50S ribosomal subunit. Forms a cluster with proteins L3 and L19. In the 70S ribosome, L14 and L19 interact and together make contacts with the 16S rRNA in bridges B5 and B8.

Binds to 23S rRNA. Forms part of two intersubunit bridges in the 70S ribosome. In Streptomyces griseus subsp. griseus (strain JCM 4626 / CBS 651.72 / NBRC 13350 / KCC S-0626 / ISP 5235), this protein is Large ribosomal subunit protein uL14.